A 294-amino-acid chain; its full sequence is tRNA dimethylallyltransferase (294 aa).

11 to 18 (GPTAVGKT) is an ATP binding site. Residue 13–18 (TAVGKT) participates in substrate binding. The segment at 36–39 (DSQQ) is interaction with substrate tRNA.

The protein belongs to the IPP transferase family. As to quaternary structure, monomer. Mg(2+) is required as a cofactor.

The enzyme catalyses adenosine(37) in tRNA + dimethylallyl diphosphate = N(6)-dimethylallyladenosine(37) in tRNA + diphosphate. Functionally, catalyzes the transfer of a dimethylallyl group onto the adenine at position 37 in tRNAs that read codons beginning with uridine, leading to the formation of N6-(dimethylallyl)adenosine (i(6)A). The chain is tRNA dimethylallyltransferase from Lactococcus lactis subsp. lactis (strain IL1403) (Streptococcus lactis).